The sequence spans 530 residues: Metal transporter Nramp5 (530 aa).

The span at 1-10 shows a compositional bias: polar residues; the sequence is MTGSTVSRQE. Residues 1–53 are disordered; sequence MTGSTVSRQENSPKRPNDSNGEFKRLLVPETSQPEEDELHESPPENQILNVEE. Over residues 11-27 the composition is skewed to basic and acidic residues; sequence NSPKRPNDSNGEFKRLL. A run of 12 helical transmembrane segments spans residues 65–85, 98–118, 147–167, 179–199, 207–227, 253–273, 299–319, 341–361, 387–407, 429–449, 458–478, and 485–505; these read FSWA…IAFL, AVAG…GLLM, ILLW…EVIG, FLPI…ISYL, LEGL…WMFN, AVGV…SALV, AALF…AKGF, YGGG…AAGQ, LSAF…AIMF, IPFA…MGVF, LAWT…LDFF, and FLVG…IIYL.

This sequence belongs to the NRAMP (TC 2.A.55) family.

It localises to the membrane. Functionally, seems to be involved in iron uptake. This chain is Metal transporter Nramp5 (NRAMP5), found in Arabidopsis thaliana (Mouse-ear cress).